The following is a 338-amino-acid chain: Secretory carrier-associated membrane protein 1 (338 aa).

A disordered region spans residues Met1–Met64. Ser2 carries the post-translational modification N-acetylserine. At Ser2 the chain carries Phosphoserine. Topologically, residues Ser2–Leu155 are cytoplasmic. At Thr45 the chain carries Phosphothreonine. A helical transmembrane segment spans residues Trp156–Val176. At Asp177 to Ala181 the chain is on the lumenal side. The helical transmembrane segment at Val182–Trp202 threads the bilayer. Residues Tyr203 to Phe218 are Cytoplasmic-facing. The chain crosses the membrane as a helical span at residues Phe219–Phe239. Topologically, residues His240–Gly261 are lumenal. Residues Ile262–Phe282 form a helical membrane-spanning segment. Over Lys283–Ile338 the chain is Cytoplasmic.

It belongs to the SCAMP family. Interacts with SYNRG and ITSN1. Interacts with SLC9A7. As to expression, widely expressed, with highest expression in brain.

The protein localises to the golgi apparatus. It is found in the trans-Golgi network membrane. The protein resides in the recycling endosome membrane. Its function is as follows. Functions in post-Golgi recycling pathways. Acts as a recycling carrier to the cell surface. This chain is Secretory carrier-associated membrane protein 1 (SCAMP1), found in Homo sapiens (Human).